We begin with the raw amino-acid sequence, 784 residues long: Cadherin-5 (784 aa).

The signal sequence occupies residues 1-25 (MQRLMMLLATSGACLGLLAVAAVAA). Residues 26 to 47 (AGANPAQRDTHSLLPTHRRQKR) constitute a propeptide that is removed on maturation. Cadherin domains are found at residues 48 to 151 (DWIW…WPVF), 152 to 258 (THRL…FPFF), 259 to 372 (TQTK…PPIF), 373 to 477 (QQPF…DNAP), and 478 to 593 (EFAK…MAAQ). The Extracellular portion of the chain corresponds to 48 to 599 (DWIWNQMHID…MAAQVGVSIQ (552 aa)). Ca(2+) contacts are provided by Glu58 and Glu59. Asn61 is a glycosylation site (N-linked (GlcNAc...) (complex) asparagine). Positions 109 and 111 each coordinate Ca(2+). N-linked (GlcNAc...) (complex) asparagine glycosylation is present at Asn112. Ca(2+) contacts are provided by Asp143, Val144, Asn145, Asp146, and Asn147. Residue Asn157 is glycosylated (N-linked (GlcNAc...) asparagine). The Ca(2+) site is built by Asp177, Asp179, His186, and Asp231. N-linked (GlcNAc...) asparagine glycosylation is present at Asn362. N-linked (GlcNAc...) (complex) asparagine glycosylation is present at Asn442. Residues Asn523 and Asn535 are each glycosylated (N-linked (GlcNAc...) asparagine). A helical membrane pass occupies residues 600–620 (AVVAILLCILTITVITLLIFL). A required for interaction with PALS1 region spans residues 621–660 (RRRLRKQARAHGKSVPEIHEQLVTYDEEGGGEMDTTSYDV). The Cytoplasmic segment spans residues 621-784 (RRRLRKQARA…GSDPREELLY (164 aa)).

In terms of assembly, part of a complex composed of AMOTL2, MAGI1 and CDH5, within the complex AMOTL2 acts as a scaffold protein for the interaction of MAGI1 with CDH5. The complex is required for coupling actin fibers to cell junctions in endothelial cells. Within the complex AMOTL2 (via its N-terminus) interacts with CDH5. Interacts (via cadherin 5 domain) with PTPRB. Interacts with TRPC4. Interacts with KRIT1. Interacts with PARD3. Interacts with RTN4 (isoform B). Interacts with PALS1; the interaction promotes PALS1 localization to cell junctions and is required for CDH5-mediated vascular lumen formation and endothelial cell. Interacts with CTNND1/p120-catenin; the interaction controls CADH5 endocytosis. Post-translationally, phosphorylated on tyrosine residues by KDR/VEGFR-2. Dephosphorylated by PTPRB. In terms of processing, O-glycosylated. Expressed in endothelial cells (at protein level). Expressed in the brain.

The protein localises to the cell junction. It is found in the adherens junction. It localises to the cell membrane. The protein resides in the cytoplasm. In terms of biological role, cadherins are calcium-dependent cell adhesion proteins. They preferentially interact with themselves in a homophilic manner in connecting cells; cadherins may thus contribute to the sorting of heterogeneous cell types. This cadherin may play a important role in endothelial cell biology through control of the cohesion and organization of the intercellular junctions. It associates with alpha-catenin forming a link to the cytoskeleton. Plays a role in coupling actin fibers to cell junctions in endothelial cells, via acting as a cell junctional complex anchor for AMOTL2 and MAGI1. Acts in concert with KRIT1 and PALS1 to establish and maintain correct endothelial cell polarity and vascular lumen. These effects are mediated by recruitment and activation of the Par polarity complex and RAP1B. Required for activation of PRKCZ and for the localization of phosphorylated PRKCZ, PARD3, TIAM1 and RAP1B to the cell junction. Associates with CTNND1/p120-catenin to control CADH5 endocytosis. This is Cadherin-5 from Homo sapiens (Human).